The following is a 316-amino-acid chain: WEB family protein At3g13190 (316 aa).

Coiled coils occupy residues 42 to 90 (WNKE…MIND), 119 to 195 (EEES…AEEH), and 233 to 266 (RDET…MAQE). Residues 295-316 (STKEVLKSKPRSSSKEGCLVKC) are disordered.

Belongs to the WEB family.

The sequence is that of WEB family protein At3g13190 from Arabidopsis thaliana (Mouse-ear cress).